We begin with the raw amino-acid sequence, 270 residues long: Esterase (270 aa).

Active-site charge relay system residues include Ser127, Asp216, and His244.

Belongs to the LovG family.

Its pathway is mycotoxin biosynthesis. Its function is as follows. Esterase; part of the gene cluster that mediates the biosynthesis of the selective antifungal agent ascochitine, an o-quinone methide that plays a possible protective role against other microbial competitors in nature and is considered to be important for pathogenicity of legume-associated Didymella species. The pathway probably begins with the synthesis of a keto-aldehyde intermediate by the ascochitine non-reducing polyketide synthase pksAC from successive condensations of 4 malonyl-CoA units, presumably with a simple acetyl-CoA starter unit. Release of the keto-aldehyde intermediate is consistent with the presence of the C-terminal reductive release domain. The HR-PKS (orf7) probably makes a diketide starter unit which is passed to the non-reducing polyketide synthase pksAC for further extension, producing ascochital and ascochitine. The aldehyde dehydrogenase (orf1), the 2-oxoglutarate-dependent dioxygenase (orf3) and the dehydrogenase (orf9) are probably involved in subsequent oxidations of methyl groups to the carboxylic acid of the heterocyclic ring. The ascochitine gene cluster also includes a gene encoding a short peptide with a cupin domain (orf2) that is often found in secondary metabolite gene clusters and which function has still to be determined. The chain is Esterase from Didymella fabae (Leaf and pod spot disease fungus).